A 462-amino-acid polypeptide reads, in one-letter code: Glycine--tRNA ligase (462 aa).

Substrate contacts are provided by arginine 99 and glutamate 174. ATP is bound by residues 206-208, 216-221, 290-291, and 334-337; these read RNE, FRTREF, EL, and GADR. Substrate is bound at residue 221-225; the sequence is FEQME. Substrate is bound at residue 330-334; it reads EPSLG.

Belongs to the class-II aminoacyl-tRNA synthetase family. As to quaternary structure, homodimer.

Its subcellular location is the cytoplasm. It carries out the reaction tRNA(Gly) + glycine + ATP = glycyl-tRNA(Gly) + AMP + diphosphate. In terms of biological role, catalyzes the attachment of glycine to tRNA(Gly). This is Glycine--tRNA ligase from Macrococcus caseolyticus (strain JCSC5402) (Macrococcoides caseolyticum).